Reading from the N-terminus, the 690-residue chain is Crooked neck-like protein 1 (690 aa).

16 HAT repeats span residues 61–93 (DYKL…WEES), 95–127 (KEIQ…MEMK), 129–161 (RQVN…MEEM), 163–194 (GNVA…FELR), 196–227 (KEVE…FEEK), 229–264 (AYFA…FEEN), 266–300 (KEFE…FEKK), 310–342 (IIVS…LVES), 344–378 (AEAD…LWVN), 388–424 (KDPE…FEIR), 459–491 (REFD…LETI), 493–527 (GDIE…FEIE), 529–560 (EETE…FELS), 565–606 (GSVA…EFGT), 608–646 (SDKE…YIFP), and 648–673 (DAAN…EREA). The interval 250-467 (MDEHLYVAFA…LREFDRCRKL (218 aa)) is mediates interaction with HSP90. Phosphoserine is present on serine 342. A Nuclear localization signal motif is present at residues 618–626 (PEKVKKRRK). Over residues 667–679 (QQQEREAAEQDPD) the composition is skewed to basic and acidic residues. Residues 667–690 (QQQEREAAEQDPDKDIDESESSSF) form a disordered region. The span at 680–690 (KDIDESESSSF) shows a compositional bias: acidic residues. Serine 689 is modified (phosphoserine).

Belongs to the crooked-neck family. Identified in the spliceosome C complex. Present in a spliceosome complex assembled in vitro containing CRNKL1, HPRP8BP and SNRPB2. Component of the minor spliceosome, which splices U12-type introns. Interacts with PPIL2 (via the PPIase cyclophilin-type domain); they may form a trimeric complex with HSP90.

It localises to the nucleus. Its subcellular location is the nucleus speckle. Functionally, involved in pre-mRNA splicing process. As a component of the minor spliceosome, involved in the splicing of U12-type introns in pre-mRNAs. The chain is Crooked neck-like protein 1 (Crnkl1) from Mus musculus (Mouse).